The primary structure comprises 311 residues: Olfactory receptor 1073 (311 aa).

Residues 1 to 25 (MKQQNDTQILQFLLLGLSENTELQP) lie on the Extracellular side of the membrane. The N-linked (GlcNAc...) asparagine glycan is linked to Asn-5. Residues 26-46 (LIYWLFFSMYLVTVWGNLIII) form a helical membrane-spanning segment. The Cytoplasmic segment spans residues 47 to 57 (LATVLDFRLHT). A helical transmembrane segment spans residues 58–78 (AMYFFLCNLSFVDICLISTTI). At 79-97 (PKMLANVHLNHKAITYEGC) the chain is on the extracellular side. Cysteines 97 and 179 form a disulfide. A helical membrane pass occupies residues 98–118 (IMQIYFFTLFVGLDNFLLAVM). Residues 119-133 (AYDRFVAICHPLRYT) lie on the Cytoplasmic side of the membrane. Residues 134 to 154 (SIMTPHLCMSLVLVSWIASVL) form a helical membrane-spanning segment. N-linked (GlcNAc...) asparagine glycosylation occurs at Asn-155. The Extracellular portion of the chain corresponds to 155 to 196 (NSSLQSFLVLQLSFCTEVEIPHFFCELSMLVHLACSDTFLSD). A helical transmembrane segment spans residues 197–217 (MAMNVLAALLGGGCLVGILYS). Over 218-244 (YSKIVSSIQAISSAEGKYKAFSTCVSH) the chain is Cytoplasmic. The chain crosses the membrane as a helical span at residues 245 to 265 (LSVVSLFYCTLLGVYLSSAVT). The Extracellular portion of the chain corresponds to 266–271 (QNSHST). The helical transmembrane segment at 272 to 292 (AATSLMYTVVTPMLNPFIYSL) threads the bilayer. Residues 293-311 (RNDNIKRALKNFVKKKLEK) lie on the Cytoplasmic side of the membrane.

Belongs to the G-protein coupled receptor 1 family. Tongue specific.

It localises to the cell membrane. Its function is as follows. Possible taste receptor. The sequence is that of Olfactory receptor 1073 (Olr1073) from Rattus norvegicus (Rat).